Here is a 107-residue protein sequence, read N- to C-terminus: Growth-regulated alpha protein (107 aa).

The signal sequence occupies residues 1-34; the sequence is MARAALSAAPSNPRLLRVALLLLLLVAAGRRAAG. Intrachain disulfides connect Cys43-Cys69 and Cys45-Cys85.

It belongs to the intercrine alpha (chemokine CxC) family. Post-translationally, N-terminal processed forms GRO-alpha(4-73), GRO-alpha(5-73) and GRO-alpha(6-73) are produced by proteolytic cleavage after secretion from peripheral blood monocytes.

The protein resides in the secreted. Its function is as follows. Has chemotactic activity for neutrophils. May play a role in inflammation and exerts its effects on endothelial cells in an autocrine fashion. In vitro, the processed forms GRO-alpha(4-73), GRO-alpha(5-73) and GRO-alpha(6-73) show a 30-fold higher chemotactic activity. This Homo sapiens (Human) protein is Growth-regulated alpha protein (CXCL1).